The sequence spans 336 residues: Melanoma-associated antigen B17 (336 aa).

Positions 1-17 are enriched in basic residues; it reads MPRGQASKRRAREKRRQ. The interval 1-108 is disordered; that stretch reads MPRGQASKRR…SSSESTGRDL (108 aa). Low complexity-rich tracts occupy residues 39 to 54 and 62 to 80; these read PSSS…QSFP and SQRA…LTSS. Over residues 90–103 the composition is skewed to polar residues; that stretch reads ESPNSFHGPSSSES. Positions 109 to 336 constitute an MAGE domain; the sequence is LNTKTGELVQ…RARASRSFQP (228 aa).

The sequence is that of Melanoma-associated antigen B17 (MAGEB17) from Homo sapiens (Human).